A 182-amino-acid polypeptide reads, in one-letter code: Molybdopterin synthase catalytic subunit (182 aa).

Residues 119–120, K135, and 142–144 each bind substrate; these read HR and KRE. The segment at 152 to 182 is disordered; that stretch reads VWRANRDGAPGQRIDTAEPAVGAGSGGEIDD.

It belongs to the MoaE family. MOCS2B subfamily. In terms of assembly, heterotetramer; composed of 2 small (MOCS2A) and 2 large (MOCS2B) subunits.

Its subcellular location is the cytoplasm. It carries out the reaction 2 [molybdopterin-synthase sulfur-carrier protein]-C-terminal-Gly-aminoethanethioate + cyclic pyranopterin phosphate + H2O = molybdopterin + 2 [molybdopterin-synthase sulfur-carrier protein]-C-terminal Gly-Gly + 2 H(+). It participates in cofactor biosynthesis; molybdopterin biosynthesis. Functionally, catalytic subunit of the molybdopterin synthase complex, a complex that catalyzes the conversion of precursor Z into molybdopterin. Acts by mediating the incorporation of 2 sulfur atoms from thiocarboxylated MOCS2A into precursor Z to generate a dithiolene group. The sequence is that of Molybdopterin synthase catalytic subunit from Pyricularia oryzae (strain 70-15 / ATCC MYA-4617 / FGSC 8958) (Rice blast fungus).